The chain runs to 672 residues: Nuclear hormone receptor family member nhr-5 (672 aa).

Residues 1-19 (MSSGGNSSNVNRNSGSSNV) are compositionally biased toward low complexity. Positions 1 to 38 (MSSGGNSSNVNRNSGSSNVITLNDSDEETEDSNLGSSS) are disordered. The nuclear receptor DNA-binding region spans 40 to 115 (TNLCKVCGAE…EGMNPAYVRP (76 aa)). NR C4-type zinc fingers lie at residues 43 to 63 (CKVC…CVGC) and 79 to 98 (CAAN…CRSC). The region spanning 155 to 424 (EMRTILMTLL…PLLTDLFGCF (270 aa)) is the NR LBD domain. A disordered region spans residues 550 to 577 (NIQGPSHLPQCGSTVTQRPTVPSSTTSS). A compositionally biased stretch (low complexity) spans 562 to 577 (STVTQRPTVPSSTTSS).

It belongs to the nuclear hormone receptor family.

The protein localises to the nucleus. In terms of biological role, orphan nuclear receptor. The chain is Nuclear hormone receptor family member nhr-5 (nhr-5) from Caenorhabditis elegans.